Consider the following 128-residue polypeptide: Small ribosomal subunit protein uS11 (128 aa).

It belongs to the universal ribosomal protein uS11 family. In terms of assembly, part of the 30S ribosomal subunit. Interacts with proteins S7 and S18. Binds to IF-3.

In terms of biological role, located on the platform of the 30S subunit, it bridges several disparate RNA helices of the 16S rRNA. Forms part of the Shine-Dalgarno cleft in the 70S ribosome. This is Small ribosomal subunit protein uS11 from Desulforudis audaxviator (strain MP104C).